Reading from the N-terminus, the 190-residue chain is MNNNLPTGSIAAAVDLLNKENVIAYPTEAVFGVGCDPDSETAVTRLLALKQRPVDKGLILIAASFEQLKPYIDDSILTAAQRKAVFDCWPGPVTFVFPAPATTPRWLTGRFDSLAVRVTNHPLVVALCNAYGKPLVSTSANLSGLPPCRTVEEVRAQFGDDFPVVEGATGGRLNPSEIRDALTGELFRQG.

The YrdC-like domain maps to 7–190 (TGSIAAAVDL…ALTGELFRQG (184 aa)).

It belongs to the SUA5 family. TsaC subfamily.

It localises to the cytoplasm. It catalyses the reaction L-threonine + hydrogencarbonate + ATP = L-threonylcarbamoyladenylate + diphosphate + H2O. In terms of biological role, required for the formation of a threonylcarbamoyl group on adenosine at position 37 (t(6)A37) in tRNAs that read codons beginning with adenine. Catalyzes the conversion of L-threonine, HCO(3)(-)/CO(2) and ATP to give threonylcarbamoyl-AMP (TC-AMP) as the acyladenylate intermediate, with the release of diphosphate. This chain is Threonylcarbamoyl-AMP synthase, found in Salmonella choleraesuis (strain SC-B67).